Here is a 343-residue protein sequence, read N- to C-terminus: Protein RecA (343 aa).

64 to 71 is an ATP binding site; that stretch reads GPESSGKT.

It belongs to the RecA family.

It is found in the cytoplasm. Can catalyze the hydrolysis of ATP in the presence of single-stranded DNA, the ATP-dependent uptake of single-stranded DNA by duplex DNA, and the ATP-dependent hybridization of homologous single-stranded DNAs. It interacts with LexA causing its activation and leading to its autocatalytic cleavage. This chain is Protein RecA, found in Bacillus mycoides (strain KBAB4) (Bacillus weihenstephanensis).